The primary structure comprises 600 residues: DNA mismatch repair protein MutL (600 aa).

The disordered stretch occupies residues 348 to 375; that stretch reads QPQAQRPQTAWSAETSPFRPYQPTTGFS. Residues 349–362 are compositionally biased toward polar residues; that stretch reads PQAQRPQTAWSAET.

This sequence belongs to the DNA mismatch repair MutL/HexB family.

Functionally, this protein is involved in the repair of mismatches in DNA. It is required for dam-dependent methyl-directed DNA mismatch repair. May act as a 'molecular matchmaker', a protein that promotes the formation of a stable complex between two or more DNA-binding proteins in an ATP-dependent manner without itself being part of a final effector complex. The protein is DNA mismatch repair protein MutL of Rhizobium leguminosarum bv. trifolii (strain WSM2304).